Reading from the N-terminus, the 906-residue chain is NADH-quinone oxidoreductase subunit G (906 aa).

The 2Fe-2S ferredoxin-type domain occupies 2 to 83 (AKIYVDSKIY…GAIISIKSTE (82 aa)). Residues Cys-34, Cys-45, Cys-48, and Cys-67 each coordinate [2Fe-2S] cluster. In terms of domain architecture, 4Fe-4S His(Cys)3-ligated-type spans 83–122 (ESEVFRSAIVELLLTNHPHDCPVCEEGGHCHLQDMTVMVK). [4Fe-4S] cluster is bound by residues His-99, Cys-103, Cys-106, Cys-112, Cys-151, Cys-154, Cys-157, Cys-201, Cys-228, Cys-231, Cys-235, and Cys-263. The 57-residue stretch at 221 to 277 (MQYAPGICHNCSVGCNISIGERYGEIRRIENRYHENINHYLICDLGRFGYSHTNLNT) folds into the 4Fe-4S Mo/W bis-MGD-type domain.

The protein belongs to the complex I 75 kDa subunit family. In terms of assembly, composed of 13 different subunits. Subunits NuoCD, E, F, and G constitute the peripheral sector of the complex. It depends on [2Fe-2S] cluster as a cofactor. The cofactor is [4Fe-4S] cluster.

The enzyme catalyses a quinone + NADH + 5 H(+)(in) = a quinol + NAD(+) + 4 H(+)(out). Its function is as follows. NDH-1 shuttles electrons from NADH, via FMN and iron-sulfur (Fe-S) centers, to quinones in the respiratory chain. Couples the redox reaction to proton translocation (for every two electrons transferred, four hydrogen ions are translocated across the cytoplasmic membrane), and thus conserves the redox energy in a proton gradient. The chain is NADH-quinone oxidoreductase subunit G (nuoG) from Buchnera aphidicola subsp. Acyrthosiphon pisum (strain APS) (Acyrthosiphon pisum symbiotic bacterium).